The primary structure comprises 252 residues: Probable endonuclease 4 (252 aa).

Zn(2+)-binding residues include His-56, His-96, Glu-129, Asp-162, His-165, His-191, Asp-204, His-206, and Glu-233.

It belongs to the AP endonuclease 2 family. Requires Zn(2+) as cofactor.

It carries out the reaction Endonucleolytic cleavage to 5'-phosphooligonucleotide end-products.. Functionally, endonuclease IV plays a role in DNA repair. It cleaves phosphodiester bonds at apurinic or apyrimidinic (AP) sites, generating a 3'-hydroxyl group and a 5'-terminal sugar phosphate. This is Probable endonuclease 4 from Mycobacterium leprae (strain Br4923).